Consider the following 224-residue polypeptide: Type II restriction enzyme BstVI (224 aa).

It belongs to the XhoI type II restriction endonuclease family.

It carries out the reaction Endonucleolytic cleavage of DNA to give specific double-stranded fragments with terminal 5'-phosphates.. A P subtype restriction enzyme that recognizes the double-stranded sequence 5'-CTCGAG-3' and cleaves after C-1. This chain is Type II restriction enzyme BstVI, found in Geobacillus stearothermophilus (Bacillus stearothermophilus).